Here is a 937-residue protein sequence, read N- to C-terminus: Chaperone protein ClpD2, chloroplastic (937 aa).

A chloroplast-targeting transit peptide spans 1–80; the sequence is MEACCCSSSS…FERFTERAVK (80 aa). 2 repeat regions span residues 81-137 and 152-217; these read AVVF…VGKE and FSGA…VQGE. Positions 81–217 constitute a Clp R domain; sequence AVVFSQREAR…KQALTRVQGE (137 aa). Positions 259 to 513 are i; sequence LALFCLDLTM…RMESFKRKKE (255 aa). Residues 304 to 311 and 658 to 665 contribute to the ATP site; these read GEAGVGKT and GPTGVGKT. The tract at residues 584-775 is II; sequence VGSEEIARVT…LIVMTSNVGS (192 aa).

This sequence belongs to the ClpA/ClpB family. ClpD subfamily. Highly expressed in stems, culms and leaves.

It localises to the plastid. The protein resides in the chloroplast. Its function is as follows. Molecular chaperone that may interact with a ClpP-like protease involved in degradation of denatured proteins in the chloroplast. This is Chaperone protein ClpD2, chloroplastic (CLPD2) from Oryza sativa subsp. japonica (Rice).